A 216-amino-acid chain; its full sequence is Pyrophosphatase PpaX (216 aa).

Aspartate 12 functions as the Nucleophile in the catalytic mechanism.

The protein belongs to the HAD-like hydrolase superfamily. PpaX family. Mg(2+) is required as a cofactor.

The catalysed reaction is diphosphate + H2O = 2 phosphate + H(+). In terms of biological role, hydrolyzes pyrophosphate formed during P-Ser-HPr dephosphorylation by HPrK/P. Might play a role in controlling the intracellular pyrophosphate pool. The chain is Pyrophosphatase PpaX from Bacillus velezensis (strain DSM 23117 / BGSC 10A6 / LMG 26770 / FZB42) (Bacillus amyloliquefaciens subsp. plantarum).